The sequence spans 439 residues: Xylose isomerase (439 aa).

Catalysis depends on residues His-99 and Asp-102. Residues Glu-230, Glu-266, His-269, Asp-294, Asp-305, Asp-307, and Asp-337 each coordinate Mg(2+).

It belongs to the xylose isomerase family. As to quaternary structure, homotetramer. The cofactor is Mg(2+).

Its subcellular location is the cytoplasm. The enzyme catalyses alpha-D-xylose = alpha-D-xylulofuranose. This Shouchella clausii (strain KSM-K16) (Alkalihalobacillus clausii) protein is Xylose isomerase.